The sequence spans 494 residues: Glutamyl-tRNA(Gln) amidotransferase subunit A (494 aa).

Catalysis depends on charge relay system residues Lys72 and Ser147. Catalysis depends on Ser171, which acts as the Acyl-ester intermediate.

It belongs to the amidase family. GatA subfamily. As to quaternary structure, heterotrimer of A, B and C subunits.

It catalyses the reaction L-glutamyl-tRNA(Gln) + L-glutamine + ATP + H2O = L-glutaminyl-tRNA(Gln) + L-glutamate + ADP + phosphate + H(+). In terms of biological role, allows the formation of correctly charged Gln-tRNA(Gln) through the transamidation of misacylated Glu-tRNA(Gln) in organisms which lack glutaminyl-tRNA synthetase. The reaction takes place in the presence of glutamine and ATP through an activated gamma-phospho-Glu-tRNA(Gln). This chain is Glutamyl-tRNA(Gln) amidotransferase subunit A, found in Methylacidiphilum infernorum (isolate V4) (Methylokorus infernorum (strain V4)).